The sequence spans 537 residues: CTP synthase (537 aa).

Residues 1 to 268 form an amidoligase domain region; it reads MPFKCIFLTG…ANFIGEKLKL (268 aa). S14 is a CTP binding site. Position 14 (S14) interacts with UTP. Residues 15–20 and D72 each bind ATP; that span reads SLGKGL. Mg(2+) contacts are provided by D72 and E142. Residues 149-151, 188-193, and K224 each bind CTP; these read DIE and KSKPTQ. Residues 188–193 and K224 each bind UTP; that span reads KSKPTQ. The Glutamine amidotransferase type-1 domain occupies 293 to 533; it reads KIGVVGKYVQ…IEAALVYSKD (241 aa). G352 serves as a coordination point for L-glutamine. The Nucleophile; for glutamine hydrolysis role is filled by C379. L-glutamine is bound by residues 380 to 383, E403, and R461; that span reads LGMQ. Catalysis depends on residues H506 and E508.

It belongs to the CTP synthase family. Homotetramer.

It catalyses the reaction UTP + L-glutamine + ATP + H2O = CTP + L-glutamate + ADP + phosphate + 2 H(+). The enzyme catalyses L-glutamine + H2O = L-glutamate + NH4(+). The catalysed reaction is UTP + NH4(+) + ATP = CTP + ADP + phosphate + 2 H(+). It functions in the pathway pyrimidine metabolism; CTP biosynthesis via de novo pathway; CTP from UDP: step 2/2. With respect to regulation, allosterically activated by GTP, when glutamine is the substrate; GTP has no effect on the reaction when ammonia is the substrate. The allosteric effector GTP functions by stabilizing the protein conformation that binds the tetrahedral intermediate(s) formed during glutamine hydrolysis. Inhibited by the product CTP, via allosteric rather than competitive inhibition. Functionally, catalyzes the ATP-dependent amination of UTP to CTP with either L-glutamine or ammonia as the source of nitrogen. Regulates intracellular CTP levels through interactions with the four ribonucleotide triphosphates. The polypeptide is CTP synthase (Chlamydia pneumoniae (Chlamydophila pneumoniae)).